Here is a 267-residue protein sequence, read N- to C-terminus: Methylglyoxal reductase DkgB (267 aa).

Y39 (proton donor) is an active-site residue. A substrate-binding site is contributed by H97. Position 179-231 (179-231 (MTLAYGKALKDEVIARIAAKHNATPAQVILAWAMGEGYSVIPSSTKRENLESN)) interacts with NADP(+).

Belongs to the aldo/keto reductase family. In terms of assembly, monomer.

It localises to the cytoplasm. It catalyses the reaction hydroxyacetone + NADP(+) = methylglyoxal + NADPH + H(+). Aldo-keto reductase that significantly contributes to cellular methylglyoxal detoxification by catalyzing the NADPH-dependent conversion of methylglyoxal to acetol. The polypeptide is Methylglyoxal reductase DkgB (Escherichia coli O157:H7).